The primary structure comprises 485 residues: CCA-adding enzyme (485 aa).

Residues Ser-53 and Arg-56 each coordinate ATP. 2 residues coordinate CTP: Ser-53 and Arg-56. The Mg(2+) site is built by Asp-65, Asp-67, and Asp-124. ATP contacts are provided by His-146, Lys-164, and Tyr-173. 3 residues coordinate CTP: His-146, Lys-164, and Tyr-173.

The protein belongs to the tRNA nucleotidyltransferase/poly(A) polymerase family. Archaeal CCA-adding enzyme subfamily. As to quaternary structure, homodimer. Mg(2+) serves as cofactor.

The catalysed reaction is a tRNA precursor + 2 CTP + ATP = a tRNA with a 3' CCA end + 3 diphosphate. It carries out the reaction a tRNA with a 3' CCA end + 2 CTP + ATP = a tRNA with a 3' CCACCA end + 3 diphosphate. Its function is as follows. Catalyzes the addition and repair of the essential 3'-terminal CCA sequence in tRNAs without using a nucleic acid template. Adds these three nucleotides in the order of C, C, and A to the tRNA nucleotide-73, using CTP and ATP as substrates and producing inorganic pyrophosphate. tRNA 3'-terminal CCA addition is required both for tRNA processing and repair. Also involved in tRNA surveillance by mediating tandem CCA addition to generate a CCACCA at the 3' terminus of unstable tRNAs. While stable tRNAs receive only 3'-terminal CCA, unstable tRNAs are marked with CCACCA and rapidly degraded. This is CCA-adding enzyme from Methanopyrus kandleri (strain AV19 / DSM 6324 / JCM 9639 / NBRC 100938).